A 372-amino-acid polypeptide reads, in one-letter code: tRNA-specific 2-thiouridylase MnmA (372 aa).

ATP is bound by residues 6-13 (AMSGGVDS) and L32. C101 serves as the catalytic Nucleophile. A disulfide bond links C101 and C193. Residue G125 coordinates ATP. The tract at residues 143 to 145 (KDQ) is interaction with tRNA. The active-site Cysteine persulfide intermediate is C193.

The protein belongs to the MnmA/TRMU family.

The protein resides in the cytoplasm. The enzyme catalyses S-sulfanyl-L-cysteinyl-[protein] + uridine(34) in tRNA + AH2 + ATP = 2-thiouridine(34) in tRNA + L-cysteinyl-[protein] + A + AMP + diphosphate + H(+). In terms of biological role, catalyzes the 2-thiolation of uridine at the wobble position (U34) of tRNA, leading to the formation of s(2)U34. In Corynebacterium kroppenstedtii (strain DSM 44385 / JCM 11950 / CIP 105744 / CCUG 35717), this protein is tRNA-specific 2-thiouridylase MnmA.